The primary structure comprises 137 residues: uncharacterized protein (137 aa).

The signal sequence occupies residues 1–15 (MKKLAIAGALLLLAG). Cys-16 carries the N-palmitoyl cysteine lipid modification. Cys-16 is lipidated: S-diacylglycerol cysteine.

It is found in the cell membrane. This is an uncharacterized protein from Escherichia coli (strain K12).